A 134-amino-acid polypeptide reads, in one-letter code: Small ribosomal subunit protein uS11 (134 aa).

The protein belongs to the universal ribosomal protein uS11 family. In terms of assembly, part of the 30S ribosomal subunit. Interacts with proteins S7 and S18. Binds to IF-3.

In terms of biological role, located on the platform of the 30S subunit, it bridges several disparate RNA helices of the 16S rRNA. Forms part of the Shine-Dalgarno cleft in the 70S ribosome. The chain is Small ribosomal subunit protein uS11 from Variovorax paradoxus (strain S110).